The following is a 1090-amino-acid chain: UPF0507 protein EC1118_1M3_1541g (1090 aa).

In terms of domain architecture, VPS9 spans 289–436 (FSVNQLLTDF…FEDFNKNTGN (148 aa)).

This sequence belongs to the UPF0507 family.

This Saccharomyces cerevisiae (strain Lalvin EC1118 / Prise de mousse) (Baker's yeast) protein is UPF0507 protein EC1118_1M3_1541g.